The following is a 938-amino-acid chain: Isoleucine--tRNA ligase (938 aa).

A 'HIGH' region motif is present at residues 58–68 (PYANGNIHIGH). Glu562 is a binding site for L-isoleucyl-5'-AMP. The 'KMSKS' region motif lies at 603 to 607 (KMSKS). An ATP-binding site is contributed by Lys606. Residues Cys901, Cys904, Cys921, and Cys924 each coordinate Zn(2+).

The protein belongs to the class-I aminoacyl-tRNA synthetase family. IleS type 1 subfamily. In terms of assembly, monomer. Zn(2+) serves as cofactor.

Its subcellular location is the cytoplasm. It carries out the reaction tRNA(Ile) + L-isoleucine + ATP = L-isoleucyl-tRNA(Ile) + AMP + diphosphate. Functionally, catalyzes the attachment of isoleucine to tRNA(Ile). As IleRS can inadvertently accommodate and process structurally similar amino acids such as valine, to avoid such errors it has two additional distinct tRNA(Ile)-dependent editing activities. One activity is designated as 'pretransfer' editing and involves the hydrolysis of activated Val-AMP. The other activity is designated 'posttransfer' editing and involves deacylation of mischarged Val-tRNA(Ile). The polypeptide is Isoleucine--tRNA ligase (Actinobacillus pleuropneumoniae serotype 7 (strain AP76)).